Reading from the N-terminus, the 453-residue chain is Bifunctional protein GlmU (453 aa).

Residues 1-226 (MTLDVVILAA…ALEVEGVNNR (226 aa)) are pyrophosphorylase. UDP-N-acetyl-alpha-D-glucosamine contacts are provided by residues 8-11 (LAAG), lysine 22, glutamine 73, 78-79 (GT), 99-101 (YGD), glycine 136, glutamate 151, asparagine 166, and asparagine 224. Aspartate 101 contacts Mg(2+). Asparagine 224 lines the Mg(2+) pocket. Residues 227–247 (SQMAALERAYQRDRAERLLTE) form a linker region. The tract at residues 248–453 (GVALADPARF…AGWKRPRKSS (206 aa)) is N-acetyltransferase. Residues arginine 330 and lysine 348 each contribute to the UDP-N-acetyl-alpha-D-glucosamine site. Histidine 360 acts as the Proton acceptor in catalysis. UDP-N-acetyl-alpha-D-glucosamine-binding residues include tyrosine 363 and asparagine 374. Residues alanine 377, 383–384 (NY), serine 402, alanine 420, and arginine 437 contribute to the acetyl-CoA site.

It in the N-terminal section; belongs to the N-acetylglucosamine-1-phosphate uridyltransferase family. The protein in the C-terminal section; belongs to the transferase hexapeptide repeat family. Homotrimer. Mg(2+) serves as cofactor.

It localises to the cytoplasm. It catalyses the reaction alpha-D-glucosamine 1-phosphate + acetyl-CoA = N-acetyl-alpha-D-glucosamine 1-phosphate + CoA + H(+). The catalysed reaction is N-acetyl-alpha-D-glucosamine 1-phosphate + UTP + H(+) = UDP-N-acetyl-alpha-D-glucosamine + diphosphate. The protein operates within nucleotide-sugar biosynthesis; UDP-N-acetyl-alpha-D-glucosamine biosynthesis; N-acetyl-alpha-D-glucosamine 1-phosphate from alpha-D-glucosamine 6-phosphate (route II): step 2/2. It participates in nucleotide-sugar biosynthesis; UDP-N-acetyl-alpha-D-glucosamine biosynthesis; UDP-N-acetyl-alpha-D-glucosamine from N-acetyl-alpha-D-glucosamine 1-phosphate: step 1/1. It functions in the pathway bacterial outer membrane biogenesis; LPS lipid A biosynthesis. Functionally, catalyzes the last two sequential reactions in the de novo biosynthetic pathway for UDP-N-acetylglucosamine (UDP-GlcNAc). The C-terminal domain catalyzes the transfer of acetyl group from acetyl coenzyme A to glucosamine-1-phosphate (GlcN-1-P) to produce N-acetylglucosamine-1-phosphate (GlcNAc-1-P), which is converted into UDP-GlcNAc by the transfer of uridine 5-monophosphate (from uridine 5-triphosphate), a reaction catalyzed by the N-terminal domain. The polypeptide is Bifunctional protein GlmU (Chromohalobacter salexigens (strain ATCC BAA-138 / DSM 3043 / CIP 106854 / NCIMB 13768 / 1H11)).